The primary structure comprises 461 residues: GTPase Der (461 aa).

EngA-type G domains follow at residues 9-171 (KTIA…DLNQ) and 200-371 (IQVG…ECFS). GTP is bound by residues 15–22 (GQPNVGKS), 62–66 (DTGGM), 123–126 (NKID), 206–213 (GRVNVGKS), 253–257 (DTAGI), and 317–320 (NKWD). Positions 372 to 456 (KRIPTSLLNS…PLILNAKDKK (85 aa)) constitute a KH-like domain.

The protein belongs to the TRAFAC class TrmE-Era-EngA-EngB-Septin-like GTPase superfamily. EngA (Der) GTPase family. Associates with the 50S ribosomal subunit.

In terms of biological role, GTPase that plays an essential role in the late steps of ribosome biogenesis. The polypeptide is GTPase Der (Helicobacter pylori (strain Shi470)).